A 213-amino-acid polypeptide reads, in one-letter code: Methylthioribulose-1-phosphate dehydratase (213 aa).

The Zn(2+) site is built by histidine 104 and histidine 106.

Belongs to the aldolase class II family. MtnB subfamily. Requires Zn(2+) as cofactor.

It catalyses the reaction 5-(methylsulfanyl)-D-ribulose 1-phosphate = 5-methylsulfanyl-2,3-dioxopentyl phosphate + H2O. It participates in amino-acid biosynthesis; L-methionine biosynthesis via salvage pathway; L-methionine from S-methyl-5-thio-alpha-D-ribose 1-phosphate: step 2/6. Functionally, catalyzes the dehydration of methylthioribulose-1-phosphate (MTRu-1-P) into 2,3-diketo-5-methylthiopentyl-1-phosphate (DK-MTP-1-P). This Stenotrophomonas maltophilia (strain R551-3) protein is Methylthioribulose-1-phosphate dehydratase.